The sequence spans 606 residues: Putative amino acid transporter AAT1 (606 aa).

Residues 1 to 156 are disordered; that stretch reads MNKKYGTSSN…DEEGTNKPKR (156 aa). 2 stretches are compositionally biased toward basic and acidic residues: residues 12–25 and 72–89; these read HDNK…ADKN and SDKK…ESSK. Residues 140-149 show a composition bias toward acidic residues; it reads SDGDYTNDEE. 11 helical membrane passes run 175 to 194, 200 to 225, 246 to 271, 283 to 301, 313 to 332, 352 to 372, 393 to 412, 428 to 449, 522 to 539, 545 to 567, and 579 to 605; these read TVLF…PYVF, ILSI…TSSL, TIID…SNFL, LFTN…ILPI, FLIF…GLQT, HFFK…NACF, VILQ…FSFL, VSIL…PLNF, MWIS…ACKV, VIGI…LIYY, and RYST…LNLI.

The protein belongs to the amino acid/polyamine transporter 2 family.

The protein localises to the vacuole membrane. In terms of biological role, putative amino acid transporter. Probably transports tryptophan. Involved in maintaining the osmotic homeostasis of the digestive vacuole. Important for the timely development and growth of the asexual-stage parasites and male gametocyte maturation. The protein is Putative amino acid transporter AAT1 of Plasmodium falciparum (isolate 3D7).